A 326-amino-acid polypeptide reads, in one-letter code: Zona pellucida-binding protein 2 (326 aa).

The signal sequence occupies residues 1–19 (MLAWALLYAVLWSLAGVGS). 3 N-linked (GlcNAc...) asparagine glycosylation sites follow: N86, N220, and N256.

Belongs to the zona pellucida-binding protein Sp38 family. Post-translationally, N-glycosylated. As to expression, expressed specifically in male germ cells.

It localises to the cytoplasmic vesicle. It is found in the secretory vesicle. Its subcellular location is the acrosome. The protein resides in the secreted. In terms of biological role, is implicated in sperm-oocyte interaction during fertilization. The chain is Zona pellucida-binding protein 2 (Zpbp2) from Mus musculus (Mouse).